The primary structure comprises 543 residues: 2,3-bisphosphoglycerate-independent phosphoglycerate mutase (543 aa).

Mn(2+) contacts are provided by D24 and S74. Catalysis depends on S74, which acts as the Phosphoserine intermediate. Substrate-binding positions include H135, 165 to 166 (RD), R197, R203, 268 to 271 (RPDR), and K341. Positions 408, 412, 449, 450, and 467 each coordinate Mn(2+).

It belongs to the BPG-independent phosphoglycerate mutase family. Monomer. The cofactor is Mn(2+).

It carries out the reaction (2R)-2-phosphoglycerate = (2R)-3-phosphoglycerate. Its pathway is carbohydrate degradation; glycolysis; pyruvate from D-glyceraldehyde 3-phosphate: step 3/5. Functionally, catalyzes the interconversion of 2-phosphoglycerate and 3-phosphoglycerate. The polypeptide is 2,3-bisphosphoglycerate-independent phosphoglycerate mutase (Parasynechococcus marenigrum (strain WH8102)).